The sequence spans 372 residues: Flagellar P-ring protein (372 aa).

The signal sequence occupies residues 1-26; it reads MNLSSLPFRLLAAAVALCAIAAPASA.

The protein belongs to the FlgI family. In terms of assembly, the basal body constitutes a major portion of the flagellar organelle and consists of four rings (L,P,S, and M) mounted on a central rod.

It is found in the periplasm. The protein localises to the bacterial flagellum basal body. Functionally, assembles around the rod to form the L-ring and probably protects the motor/basal body from shearing forces during rotation. In Xanthomonas campestris pv. campestris (strain B100), this protein is Flagellar P-ring protein.